The primary structure comprises 357 residues: GTPase Obg (357 aa).

One can recognise an Obg domain in the interval 1-159 (MKFVDEAEIQ…RTLKLELKLL (159 aa)). The OBG-type G domain maps to 160–343 (ADIGMLGFPN…IMKSAMTLFE (184 aa)). GTP contacts are provided by residues 166–173 (GFPNVGKS), 191–195 (FTTLY), 213–216 (DVPG), 293–296 (NKAD), and 324–326 (SAV). Mg(2+)-binding residues include Ser173 and Thr193.

Belongs to the TRAFAC class OBG-HflX-like GTPase superfamily. OBG GTPase family. Monomer. Mg(2+) is required as a cofactor.

It is found in the cytoplasm. An essential GTPase which binds GTP, GDP and possibly (p)ppGpp with moderate affinity, with high nucleotide exchange rates and a fairly low GTP hydrolysis rate. Plays a role in control of the cell cycle, stress response, ribosome biogenesis and in those bacteria that undergo differentiation, in morphogenesis control. The chain is GTPase Obg from Xylella fastidiosa (strain M12).